The chain runs to 461 residues: MFVPSNIGWLVLSCGLFVAYWVLLAIYRLHFHPLSRYRGPRVAAVSNSWYEWYWNYYLNGQMIFEIQRLHKQYGPVVRIGVNDLSIDDPEVYQAMTKVSSGFTKDPHFYRCISFPGTSIGETDPAQSRIRRKVLTPALSGTRVQELAPAILVKVERLLRRVDLCAQSAKTICITSACKALTMDIISKIVLGREIGCIEEPDFRNSFIENLNAAFETGWIATAFPRLATLALWMASMSDFSSYLEVFDPHSAVYVAREDVNVPSAIAAHADRSAVIDMLMDPLTVKGHTVPSLEQLNDEAVILLTAGNDTTSNSMIFGLYQICNNMSVYKTLFQELQGHFPSVDQQITYEEAKQLPYLTATIKEILRLGTPLPGRLPRLIPSSGFQLYGQDLPPKTSIHTSPYLXNRHPSIWDNPNDFNPDRWLRKNSRDLDKYLATFNRGARQCLGKEWVHSYQIAGLWQD.

The chain crosses the membrane as a helical span at residues 7-27; that stretch reads IGWLVLSCGLFVAYWVLLAIY. Residues asparagine 307 and asparagine 324 are each glycosylated (N-linked (GlcNAc...) asparagine). Residue cysteine 444 coordinates heme.

This sequence belongs to the cytochrome P450 family. Requires heme as cofactor.

The protein resides in the membrane. It functions in the pathway phytotoxin biosynthesis. Functionally, cytochrome P450 monooxygenase; part of the gene cluster that mediates the biosynthesis of the phytotoxin solanapyrone, a causal agent of early blight disease of potato and tomato. The prosolanapyrone synthase sol1 is a polyketide synthase that produces the octaketide desmethylprosolanapyrone I via sequential condensations of 7 malonyl-CoA units with one acetyl-CoA unit, and one methylation step. The octaketide backbone is further methylated by the sol2 O-methyltransferase to yield prosolanapyrone I. Prosolanapyrone I is hydroxylated to prosolanapyrone II by the cytochrome P450 monooxygenase sol6. The solanapyrone synthase sol5 then catalyzes the oxidation of prosolanapyrone II and the subsequent Diels Alder cycloisomerization of the product prosolanapyrone III to solanapyrones A and D. Solanapyrones A and D are then converted into solanapyrones B and E, respectively, by the sol3 dehydrogenase. The polypeptide is Cytochrome P450 monooxygenase sol6 (sol6) (Alternaria solani).